A 2169-amino-acid chain; its full sequence is Protein sidekick-1 (2169 aa).

The N-terminal stretch at 1–50 is a signal peptide; that stretch reads MVGRKVDREIIARRNSRRDGMMMKLNFCFFFCRRWWAFLLLQLHMLQALA. Topologically, residues 51–1961 are extracellular; the sequence is QDDVAPYFKT…TEAPFYEEWW (1911 aa). Ig-like C2-type domains follow at residues 56–138, 143–229, 245–333, 338–428, and 432–521; these read PYFK…SEVQ, GNFM…SPLI, PIIV…AFIS, PYFT…LDVT, and PAFI…VMLT. Cys-78 and Cys-121 form a disulfide bridge. 3 N-linked (GlcNAc...) asparagine glycosylation sites follow: Asn-93, Asn-223, and Asn-253. 3 disulfide bridges follow: Cys-267-Cys-314, Cys-360-Cys-410, and Cys-453-Cys-505. N-linked (GlcNAc...) asparagine glycans are attached at residues Asn-502, Asn-524, and Asn-534. The Ig-like C2-type 6 domain occupies 525–615; the sequence is RTFIVHPPEN…GNDSRMARLE (91 aa). An intrachain disulfide couples Cys-547 to Cys-599. Residues Asn-607, Asn-631, Asn-734, Asn-773, Asn-834, Asn-967, and Asn-977 are each glycosylated (N-linked (GlcNAc...) asparagine). Fibronectin type-III domains follow at residues 622–718, 723–819, 824–922, 926–1020, 1024–1123, 1128–1226, 1231–1328, 1332–1426, 1431–1528, 1533–1651, 1656–1752, 1756–1851, and 1854–1955; these read SPQN…LPEE, PPKN…TLQG, PPQN…TLED, AVGH…VPPE, APSN…TLQA, APGS…TRES, PPEN…TKDD, PPIR…TEKR, PPQQ…TLQD, PPSS…VGEA, APQN…THQA, APSF…AGPA, and SPGS…TEAP. 2 N-linked (GlcNAc...) asparagine glycosylation sites follow: Asn-1234 and Asn-1285. A disordered region spans residues 1423–1443; that stretch reads TEKRERPAPPQQLTTPQSDVS. The span at 1433–1443 shows a compositional bias: polar residues; that stretch reads QQLTTPQSDVS. 5 N-linked (GlcNAc...) asparagine glycosylation sites follow: Asn-1606, Asn-1700, Asn-1719, Asn-1771, and Asn-1845. The helical transmembrane segment at 1962–1982 threads the bilayer; sequence FLLVMALSSLILILLVVFALV. Over 1983–2169 the chain is Cytoplasmic; that stretch reads LHGQSKKYKN…TPVTGFSSFV (187 aa). Disordered regions lie at residues 2028 to 2050 and 2145 to 2169; these read TFSK…HYSD and GGVY…SSFV. Residues 2160–2169 show a composition bias toward polar residues; that stretch reads TPVTGFSSFV. A PDZ-binding motif is present at residues 2163–2169; that stretch reads TGFSSFV.

The protein belongs to the sidekick family. In terms of assembly, homodimer; mediates homophilic interactions to promote cell adhesion. Expressed by non-overlapping subsets of retinal neurons. SDK1, SDK2, DSCAM and DSCAML1 are expressed in non-overlapping subsets of interneurons and retinal ganglion cells (RGCs) that form synapses in distinct inner plexiform layer (IPL) sublaminae.

Its subcellular location is the cell membrane. The protein localises to the synapse. Functionally, adhesion molecule that promotes lamina-specific synaptic connections in the retina. Expressed in specific subsets of interneurons and retinal ganglion cells (RGCs) and promotes synaptic connectivity via homophilic interactions. The protein is Protein sidekick-1 of Gallus gallus (Chicken).